The sequence spans 213 residues: 2,3-bisphosphoglycerate-dependent phosphoglycerate mutase (213 aa).

Substrate contacts are provided by residues 8-15 (RHGQSEWN), 21-22 (TG), Arg-58, 84-87 (ERNY), Lys-95, 111-112 (RR), and 155-156 (GN). Catalysis depends on His-9, which acts as the Tele-phosphohistidine intermediate. Glu-84 (proton donor/acceptor) is an active-site residue.

The protein belongs to the phosphoglycerate mutase family. BPG-dependent PGAM subfamily.

It catalyses the reaction (2R)-2-phosphoglycerate = (2R)-3-phosphoglycerate. It functions in the pathway carbohydrate degradation; glycolysis; pyruvate from D-glyceraldehyde 3-phosphate: step 3/5. Functionally, catalyzes the interconversion of 2-phosphoglycerate and 3-phosphoglycerate. The polypeptide is 2,3-bisphosphoglycerate-dependent phosphoglycerate mutase (Cytophaga hutchinsonii (strain ATCC 33406 / DSM 1761 / CIP 103989 / NBRC 15051 / NCIMB 9469 / D465)).